Consider the following 178-residue polypeptide: ATP synthase subunit delta (178 aa).

It belongs to the ATPase delta chain family. In terms of assembly, F-type ATPases have 2 components, F(1) - the catalytic core - and F(0) - the membrane proton channel. F(1) has five subunits: alpha(3), beta(3), gamma(1), delta(1), epsilon(1). F(0) has three main subunits: a(1), b(2) and c(10-14). The alpha and beta chains form an alternating ring which encloses part of the gamma chain. F(1) is attached to F(0) by a central stalk formed by the gamma and epsilon chains, while a peripheral stalk is formed by the delta and b chains.

The protein resides in the cell inner membrane. Functionally, f(1)F(0) ATP synthase produces ATP from ADP in the presence of a proton or sodium gradient. F-type ATPases consist of two structural domains, F(1) containing the extramembraneous catalytic core and F(0) containing the membrane proton channel, linked together by a central stalk and a peripheral stalk. During catalysis, ATP synthesis in the catalytic domain of F(1) is coupled via a rotary mechanism of the central stalk subunits to proton translocation. In terms of biological role, this protein is part of the stalk that links CF(0) to CF(1). It either transmits conformational changes from CF(0) to CF(1) or is implicated in proton conduction. This chain is ATP synthase subunit delta, found in Methylococcus capsulatus (strain ATCC 33009 / NCIMB 11132 / Bath).